The sequence spans 195 residues: Peptidyl-tRNA hydrolase (195 aa).

A tRNA-binding site is contributed by Tyr-18. Residue His-23 is the Proton acceptor of the active site. The tRNA site is built by Phe-69, Asn-71, and Asn-117.

Belongs to the PTH family. In terms of assembly, monomer.

It is found in the cytoplasm. The enzyme catalyses an N-acyl-L-alpha-aminoacyl-tRNA + H2O = an N-acyl-L-amino acid + a tRNA + H(+). Hydrolyzes ribosome-free peptidyl-tRNAs (with 1 or more amino acids incorporated), which drop off the ribosome during protein synthesis, or as a result of ribosome stalling. Its function is as follows. Catalyzes the release of premature peptidyl moieties from peptidyl-tRNA molecules trapped in stalled 50S ribosomal subunits, and thus maintains levels of free tRNAs and 50S ribosomes. The sequence is that of Peptidyl-tRNA hydrolase from Hahella chejuensis (strain KCTC 2396).